The primary structure comprises 884 residues: Coatomer subunit gamma-1 (884 aa).

5 HEAT repeats span residues 65 to 100 (VEAT…SPSS), 101 to 138 (DEVI…GTLL), 286 to 323 (RELA…TRPL), 325 to 357 (VTNC…TGNE), and 358 to 395 (SSVD…KFPL). The segment at 592-612 (QPLQEKKAPGKKPPAGAPAPA) is disordered. Positions 602-612 (KKPPAGAPAPA) are enriched in pro residues.

It belongs to the COPG family. As to quaternary structure, oligomeric complex that consists of at least the alpha, beta, beta', gamma, delta, epsilon and zeta subunits.

Its subcellular location is the cytoplasm. The protein resides in the golgi apparatus membrane. It localises to the cytoplasmic vesicle. It is found in the COPI-coated vesicle membrane. Functionally, the coatomer is a cytosolic protein complex that binds to dilysine motifs and reversibly associates with Golgi non-clathrin-coated vesicles, which further mediate biosynthetic protein transport from the ER, via the Golgi up to the trans Golgi network. Coatomer complex is required for budding from Golgi membranes, and is essential for the retrograde Golgi-to-ER transport of dilysine-tagged proteins. The chain is Coatomer subunit gamma-1 from Oryza sativa subsp. japonica (Rice).